A 2183-amino-acid chain; its full sequence is COPII coat assembly protein SEC16 (2183 aa).

Disordered stretches follow at residues 60 to 83 (TMAK…VAVP), 102 to 198 (SSTS…TVET), 247 to 278 (SKEE…TPSI), 358 to 608 (QADE…ITLS), 717 to 1071 (STPN…SEFK), 1541 to 1596 (TPGY…GYER), 1693 to 2044 (PPSA…KKVY), and 2066 to 2183 (GDLP…IMNN). The span at 64-75 (KNNKKSKAKAKK) shows a compositional bias: basic residues. Low complexity predominate over residues 102–134 (SSTSASLSVPESAAATETTASTSPTSPVTNVSP). The span at 149–175 (PDDEEDIDEEEETGTEESAEAEAEPES) shows a compositional bias: acidic residues. Residues 259–278 (VATSTTTDVATPVATATPSI) are compositionally biased toward low complexity. 3 stretches are compositionally biased toward basic and acidic residues: residues 358-369 (QADEYRKVRDQL), 387-405 (EEAK…HEDD), and 429-451 (PETK…KTEP). Positions 717–732 (STPNMYQPVSSQSTPS) are enriched in polar residues. Over residues 740–749 (KRVDKNKSDA) the composition is skewed to basic and acidic residues. The span at 781 to 791 (PGLMPAFGAAP) shows a compositional bias: low complexity. 3 stretches are compositionally biased toward pro residues: residues 792–807 (GAPP…PPVA), 815–824 (APAPVQPPTT), and 906–916 (PYAPPSGPSAV). Composition is skewed to low complexity over residues 990–1008 (VAAA…GTAS) and 1016–1043 (PRVS…VAPA). Positions 1697 to 1714 (PSASGASPYAPSASSFSP) are enriched in low complexity. Acidic residues predominate over residues 1733–1746 (EEEETEAVDQEQEP). The segment covering 1751–1766 (SHLENENERYEQKSEP) has biased composition (basic and acidic residues). Residues 1769-1785 (EPMAHPPPAQKAPPAAP) are compositionally biased toward pro residues. Composition is skewed to low complexity over residues 1786-1804 (PAQQ…ARKV) and 1831-1846 (SAAA…SAYS). Composition is skewed to acidic residues over residues 1890-1902 (AEEE…ETEV) and 1934-1943 (DAGDYGDDEG). The segment covering 1957–1966 (SNLPPVPLPG) has biased composition (pro residues). A compositionally biased stretch (low complexity) spans 1969 to 1986 (PATSAAPPASRYSAPTAA). 2 stretches are compositionally biased toward basic and acidic residues: residues 2004 to 2022 (AKKE…DGGK) and 2031 to 2044 (KKGE…KKVY). Residues 2079–2104 (GPPPPPKAKKPAGPPAGGTPPPPSGG) show a composition bias toward pro residues. The span at 2105–2117 (APPVGASRGATPP) shows a compositional bias: low complexity. The span at 2118 to 2130 (VATPPAADTPPVP) shows a compositional bias: pro residues. Over residues 2135-2146 (APRPAATGAPRP) the composition is skewed to low complexity.

It belongs to the SEC16 family.

The protein resides in the endoplasmic reticulum membrane. Functionally, involved in the initiation of assembly of the COPII coat required for the formation of transport vesicles from the endoplasmic reticulum (ER) and the selection of cargo molecules. Also involved in autophagy. The chain is COPII coat assembly protein SEC16 (SEC16) from Yarrowia lipolytica (strain CLIB 122 / E 150) (Yeast).